The following is a 130-amino-acid chain: Histone H2A (130 aa).

N6-acetyllysine occurs at positions 4 and 7. Gln-105 is subject to N5-methylglutamine. Ser-127 is subject to Phosphoserine. The [ST]-Q motif signature appears at 127-128; the sequence is SQ.

It belongs to the histone H2A family. In terms of assembly, the nucleosome is a histone octamer containing two molecules each of H2A, H2B, H3 and H4 assembled in one H3-H4 heterotetramer and two H2A-H2B heterodimers. The octamer wraps approximately 147 bp of DNA. Post-translationally, phosphorylated to form H2AS128ph (gamma-H2A) in response to DNA double-strand breaks (DSBs) generated by exogenous genotoxic agents and by stalled replication forks. Phosphorylation is dependent on the DNA damage checkpoint kinases MEC1/ATR and TEL1/ATM, spreads on either side of a detected DSB site and may mark the surrounding chromatin for recruitment of proteins required for DNA damage signaling and repair. Gamma-H2A is removed from the DNA prior to the strand invasion-primer extension step of the repair process and subsequently dephosphorylated by PPH3, a component of the histone H2A phosphatase complex (HTP-C). Dephosphorylation is necessary for efficient recovery from the DNA damage checkpoint. In terms of processing, acetylated by ESA1 to form H2AK4ac and H2AK7ac.

It is found in the nucleus. Its subcellular location is the chromosome. Functionally, core component of nucleosome which plays a central role in DNA double strand break (DSB) repair. Nucleosomes wrap and compact DNA into chromatin, limiting DNA accessibility to the cellular machineries which require DNA as a template. Histones thereby play a central role in transcription regulation, DNA repair, DNA replication and chromosomal stability. DNA accessibility is regulated via a complex set of post-translational modifications of histones, also called histone code, and nucleosome remodeling. The chain is Histone H2A (HTA1) from Kluyveromyces lactis (strain ATCC 8585 / CBS 2359 / DSM 70799 / NBRC 1267 / NRRL Y-1140 / WM37) (Yeast).